We begin with the raw amino-acid sequence, 134 residues long: Small ribosomal subunit protein bS6 (134 aa).

The disordered stretch occupies residues 100–134; that stretch reads SFLARDETDRRERSEETAEGEGEPDHSANEAVVTA. Residues 103–115 are compositionally biased toward basic and acidic residues; sequence ARDETDRRERSEE.

This sequence belongs to the bacterial ribosomal protein bS6 family.

Binds together with bS18 to 16S ribosomal RNA. The polypeptide is Small ribosomal subunit protein bS6 (Acidithiobacillus ferrooxidans (strain ATCC 23270 / DSM 14882 / CIP 104768 / NCIMB 8455) (Ferrobacillus ferrooxidans (strain ATCC 23270))).